Here is a 150-residue protein sequence, read N- to C-terminus: Putative biopolymer transport protein ExbB-like 2 (150 aa).

3 helical membrane passes run 5-25 (VDYGIIGFLIFLSVIVIAIAI), 63-83 (APYIGLLGTVMGIMLTFMDLG), and 97-117 (LALALKATGMGLLVAIPAIVI).

This sequence belongs to the ExbB/TolQ family.

It localises to the cell inner membrane. The chain is Putative biopolymer transport protein ExbB-like 2 from Helicobacter pylori (strain J99 / ATCC 700824) (Campylobacter pylori J99).